Consider the following 469-residue polypeptide: Glutamate--tRNA ligase 2 (469 aa).

The 'HIGH' region motif lies at 8-18 (PSPTGFLHVGG). The 'KMSKS' region signature appears at 250–254 (KLSKR). Lys253 serves as a coordination point for ATP.

This sequence belongs to the class-I aminoacyl-tRNA synthetase family. Glutamate--tRNA ligase type 1 subfamily. As to quaternary structure, monomer.

The protein resides in the cytoplasm. The enzyme catalyses tRNA(Glu) + L-glutamate + ATP = L-glutamyl-tRNA(Glu) + AMP + diphosphate. Catalyzes the attachment of glutamate to tRNA(Glu) in a two-step reaction: glutamate is first activated by ATP to form Glu-AMP and then transferred to the acceptor end of tRNA(Glu). The sequence is that of Glutamate--tRNA ligase 2 from Thermotoga petrophila (strain ATCC BAA-488 / DSM 13995 / JCM 10881 / RKU-1).